A 439-amino-acid chain; its full sequence is MDQLANHFKSHIAELNHRVAEIISRENLSGLVIHSGQPHRQFLDDMDYPFKVNPHFKAWLPILDNPHCWLLVNGRDKPQLIFYRPVDFWHKVADLPDAFWAEHVEIKLLTKADKVAELLPSDISQWAYIGEHLDVAEVLGFKTRNPDAVMSYLHYHRASKTQYELCCLRNANEIAVKGHLAAKNAFFNGGSEFEIQQEYLTATNQGENEVPYGNIVALNENAAILHYTKLESVRPESRHSFLIDAGANFFGYASDITRTYAFEKNIFSELIEAMDKMQQEIISMMRPGVKYVDLHIATHQKLAKILVDFDIASGEPQSLVDQGITNVFFPHGLGHMLGLQVHDMGGFLHDERGTHIAAPDAHPFLRCTRTLAANQVLTIEPGIYIIDSLLNELKQDSRKKQVNWQTVDLLRPFGGIRIEDNVIVHADQNENMTRDCGLN.

The Mn(2+) site is built by aspartate 244, aspartate 255, histidine 335, glutamate 380, and glutamate 419.

The protein belongs to the peptidase M24B family. Bacterial-type prolidase subfamily. Mn(2+) is required as a cofactor.

The enzyme catalyses Xaa-L-Pro dipeptide + H2O = an L-alpha-amino acid + L-proline. Splits dipeptides with a prolyl residue in the C-terminal position. This is Xaa-Pro dipeptidase from Shewanella woodyi (strain ATCC 51908 / MS32).